Reading from the N-terminus, the 514-residue chain is 2,3-bisphosphoglycerate-independent phosphoglycerate mutase (514 aa).

Residues Asp14 and Ser64 each coordinate Mn(2+). Residue Ser64 is the Phosphoserine intermediate of the active site. Residues His125, 155–156 (RD), Arg187, Arg193, 263–266 (RADR), and Lys336 contribute to the substrate site. Positions 403, 407, 444, 445, and 463 each coordinate Mn(2+).

It belongs to the BPG-independent phosphoglycerate mutase family. As to quaternary structure, monomer. The cofactor is Mn(2+).

It carries out the reaction (2R)-2-phosphoglycerate = (2R)-3-phosphoglycerate. It participates in carbohydrate degradation; glycolysis; pyruvate from D-glyceraldehyde 3-phosphate: step 3/5. Functionally, catalyzes the interconversion of 2-phosphoglycerate and 3-phosphoglycerate. This Shewanella baltica (strain OS185) protein is 2,3-bisphosphoglycerate-independent phosphoglycerate mutase.